Consider the following 499-residue polypeptide: Cytochrome P450 ARB_01131 (499 aa).

The signal sequence occupies residues 1–21 (MLSLIVACLVLPLICYKLVRS). N23 carries N-linked (GlcNAc...) asparagine glycosylation. C437 contacts heme.

The protein belongs to the cytochrome P450 family. Requires heme as cofactor.

Its function is as follows. Together with an NADPH cytochrome P450 the enzyme system catalyzes the terminal hydroxylation as the first step in the assimilation of alkanes and fatty acids. The sequence is that of Cytochrome P450 ARB_01131 from Arthroderma benhamiae (strain ATCC MYA-4681 / CBS 112371) (Trichophyton mentagrophytes).